A 120-amino-acid polypeptide reads, in one-letter code: Large ribosomal subunit protein uL18 (120 aa).

A disordered region spans residues 1-29 (MITKPNKNAGRKKRHAHVRRTLSGTPQRP). Basic residues predominate over residues 9-20 (AGRKKRHAHVRR).

It belongs to the universal ribosomal protein uL18 family. Part of the 50S ribosomal subunit; part of the 5S rRNA/L5/L18/L25 subcomplex. Contacts the 5S and 23S rRNAs.

Functionally, this is one of the proteins that bind and probably mediate the attachment of the 5S RNA into the large ribosomal subunit, where it forms part of the central protuberance. The chain is Large ribosomal subunit protein uL18 from Shouchella clausii (strain KSM-K16) (Alkalihalobacillus clausii).